The sequence spans 149 residues: Large ribosomal subunit protein bL9 (149 aa).

This sequence belongs to the bacterial ribosomal protein bL9 family.

In terms of biological role, binds to the 23S rRNA. This chain is Large ribosomal subunit protein bL9, found in Citrobacter koseri (strain ATCC BAA-895 / CDC 4225-83 / SGSC4696).